Consider the following 345-residue polypeptide: S-adenosylmethionine:tRNA ribosyltransferase-isomerase (345 aa).

It belongs to the QueA family. Monomer.

Its subcellular location is the cytoplasm. The catalysed reaction is 7-aminomethyl-7-carbaguanosine(34) in tRNA + S-adenosyl-L-methionine = epoxyqueuosine(34) in tRNA + adenine + L-methionine + 2 H(+). It participates in tRNA modification; tRNA-queuosine biosynthesis. Transfers and isomerizes the ribose moiety from AdoMet to the 7-aminomethyl group of 7-deazaguanine (preQ1-tRNA) to give epoxyqueuosine (oQ-tRNA). The polypeptide is S-adenosylmethionine:tRNA ribosyltransferase-isomerase (Acinetobacter baumannii (strain AB0057)).